A 218-amino-acid polypeptide reads, in one-letter code: MARKWNGRAVARALVLATLWLAVSGRPLAQQSQSVSDEDPLFLYGWGKITRLQYLYSAGPYVSNCFLRIRSDGSVDCEEDQNERNLLEFRAVALKTIAIKDVSSVRYLCMSADGKIYGLIRYSEEDCTFREEMDCLGYNQYRSMKHHLHIIFIQAKPREQLQDQKPSNFIPVFHRSFFETGDQLRSKMFSLPLESDSMDPFRMVEDVDHLVKSPSFQK.

An N-terminal signal peptide occupies residues 1–25 (MARKWNGRAVARALVLATLWLAVSG).

It belongs to the heparin-binding growth factors family. As to quaternary structure, interacts with MALRD1. In terms of tissue distribution, expressed in the developing brain.

It localises to the secreted. In terms of biological role, involved in the suppression of bile acid biosynthesis through down-regulation of CYP7A1 expression. This chain is Fibroblast growth factor 15 (Fgf15), found in Mus musculus (Mouse).